Here is a 314-residue protein sequence, read N- to C-terminus: Annexin-like protein RJ4 (314 aa).

4 Annexin repeats span residues 10 to 81, 82 to 153, 165 to 236, and 240 to 311; these read FCAK…RWTL, DPAD…ALVT, KLAN…TAIR, and DPKK…TLLG. 3 residues coordinate Ca(2+): glycine 25, glycine 27, and glutamate 67. Ca(2+) contacts are provided by isoleucine 253, arginine 255, glycine 257, aspartate 297, and threonine 298.

Belongs to the annexin (TC 1.A.31.1) family. Predominantly in developing fruit.

The polypeptide is Annexin-like protein RJ4 (Fragaria ananassa (Strawberry)).